Here is a 489-residue protein sequence, read N- to C-terminus: UDP-N-acetylmuramoyl-L-alanyl-D-glutamate--2,6-diaminopimelate ligase (489 aa).

Serine 30 is a binding site for UDP-N-acetyl-alpha-D-muramoyl-L-alanyl-D-glutamate. Residue 113-119 (GTNGKTS) participates in ATP binding. UDP-N-acetyl-alpha-D-muramoyl-L-alanyl-D-glutamate contacts are provided by residues 155–156 (TT), serine 182, glutamine 188, and arginine 190. At lysine 222 the chain carries N6-carboxylysine. Meso-2,6-diaminopimelate is bound by residues arginine 388, 412 to 415 (DNPR), glycine 463, and glutamate 467. Positions 412 to 415 (DNPR) match the Meso-diaminopimelate recognition motif motif.

Belongs to the MurCDEF family. MurE subfamily. The cofactor is Mg(2+). In terms of processing, carboxylation is probably crucial for Mg(2+) binding and, consequently, for the gamma-phosphate positioning of ATP.

Its subcellular location is the cytoplasm. It carries out the reaction UDP-N-acetyl-alpha-D-muramoyl-L-alanyl-D-glutamate + meso-2,6-diaminopimelate + ATP = UDP-N-acetyl-alpha-D-muramoyl-L-alanyl-gamma-D-glutamyl-meso-2,6-diaminopimelate + ADP + phosphate + H(+). It participates in cell wall biogenesis; peptidoglycan biosynthesis. Catalyzes the addition of meso-diaminopimelic acid to the nucleotide precursor UDP-N-acetylmuramoyl-L-alanyl-D-glutamate (UMAG) in the biosynthesis of bacterial cell-wall peptidoglycan. In Coxiella burnetii (strain RSA 493 / Nine Mile phase I), this protein is UDP-N-acetylmuramoyl-L-alanyl-D-glutamate--2,6-diaminopimelate ligase.